The following is a 150-amino-acid chain: Troponin C, isoform 2A (150 aa).

Methionine 1 carries the post-translational modification N-acetylmethionine. EF-hand domains are found at residues 7–42 (EQIG…MGVK), 43–78 (ISEK…FLIE), 83–118 (ALKT…LDNR), and 119–150 (LTEE…MMNG). Aspartate 56, aspartate 58, serine 60, glutamate 62, and glutamate 67 together coordinate Ca(2+). Residues aspartate 132, aspartate 134, serine 136, threonine 138, and glutamate 143 each contribute to the Ca(2+) site.

The protein belongs to the troponin C family.

Its function is as follows. Troponin is the central regulatory protein of striated muscle contraction. Tn consists of three components: Tn-I which is the inhibitor of actomyosin ATPase, Tn-T which contains the binding site for tropomyosin and Tn-C. The binding of calcium to Tn-C abolishes the inhibitory action of Tn on actin filaments. In Homarus americanus (American lobster), this protein is Troponin C, isoform 2A.